Here is a 456-residue protein sequence, read N- to C-terminus: MDSLRLISKSIKIEGTPFGSSHQRNQIFLKSVAFFLLIGLAYRFLITNSTVSPVPTVRSSPESLPPDPSGLTAITQTSASVDSPANITTIASQNVSTKCDIFIGNWVPDPSGPIYTNVSCRHIQDYQNCLKNGRPDVNYLRWRWQPRDCDLPRFNPEQFLDNMRNKWLAFIGDSISRNHVQSLLCILSQVEEVEDIFHDKEYKSRIWRFPSYNFTLSVIWSPFLVKAETFENGVPFSDIRVHLDKLDQKWTDQYINFDYVVISGGKWFLKTTIFHENNTVTGCHYCQGKNNMTELGYLYSYRKVLHLVLDFVAEPNHKAQVLFRTTTPDHFENGEWDSGGFCNRTMPFTEGSEGEMKSEDVSMRDIELEEFYKTTTTQQEGSNSNIVLLDTTSMSLLRPDGHPGPYRYPNPFAGLKNKELNQVQNDCLHWCLPGPIDSWNDLMVEVMLNRERQRRE.

Residues 26-42 (QIFLKSVAFFLLIGLAY) form a helical; Signal-anchor for type II membrane protein membrane-spanning segment. Positions 172-174 (GDS) match the GDS motif motif. The DCXHWCLPGXXDXWN motif signature appears at 426-440 (DCLHWCLPGPIDSWN).

This sequence belongs to the PC-esterase family. TBL subfamily.

Its subcellular location is the membrane. Its function is as follows. May be involved in the O-acetylation of mannan. May act as a bridging protein that binds pectin and other cell wall polysaccharides. Probably involved in maintaining esterification of pectins. The protein is Protein trichome birefringence-like 25 (TBL25) of Arabidopsis thaliana (Mouse-ear cress).